Reading from the N-terminus, the 543-residue chain is Chaperonin GroEL (543 aa).

Residues 29-32, 86-90, glycine 413, 477-479, and aspartate 493 each bind ATP; these read TLGP, DGTTT, and DAL.

It belongs to the chaperonin (HSP60) family. In terms of assembly, forms a cylinder of 14 subunits composed of two heptameric rings stacked back-to-back. Interacts with the co-chaperonin GroES.

The protein resides in the cytoplasm. The catalysed reaction is ATP + H2O + a folded polypeptide = ADP + phosphate + an unfolded polypeptide.. Its function is as follows. Together with its co-chaperonin GroES, plays an essential role in assisting protein folding. The GroEL-GroES system forms a nano-cage that allows encapsulation of the non-native substrate proteins and provides a physical environment optimized to promote and accelerate protein folding. This is Chaperonin GroEL from Clostridium botulinum.